Reading from the N-terminus, the 86-residue chain is 4-hydroxyphenylacetate decarboxylase small subunit (86 aa).

[4Fe-4S] cluster-binding residues include His3, Cys6, Cys19, Cys36, Cys45, Cys48, Cys62, and Cys80.

The protein belongs to the HPA decarboxylase small subunit family. Heterooctamer consisting of 4 large (HpdB) subunits and 4 small (HpdC) subunits, arranged as a tetramer of heterodimers. The cofactor is [4Fe-4S] cluster.

The catalysed reaction is 4-hydroxyphenylacetate + H(+) = 4-methylphenol + CO2. It catalyses the reaction 3,4-dihydroxyphenylacetate + H(+) = 4-methylcatechol + CO2. In terms of biological role, component of the HPA decarboxylase that decarboxylates phenylacetates with a hydroxyl group in the p-position. Active toward 4-hydroxyphenylacetate and 3,4-dihydroxyphenylacetate, forming 4-methylphenol and 4-methylcatechol, respectively. Is likely involved in the catabolism of aromatic amino acids such as tyrosine fermentation. 4-methylphenol (p-cresol) formation provides metabolic toxicity, which allows an active suppression of other microbes and may provide growth advantages for the producers in highly competitive environments. The small subunit is essential for enzymatic activity of HPA decarboxylase, and also seems to be involved in the regulation of the enzyme oligomeric state and catalytic activity. In Clostridium scatologenes, this protein is 4-hydroxyphenylacetate decarboxylase small subunit.